We begin with the raw amino-acid sequence, 240 residues long: DNA repair protein RecO (240 aa).

The protein belongs to the RecO family.

Its function is as follows. Involved in DNA repair and RecF pathway recombination. The chain is DNA repair protein RecO from Actinobacillus pleuropneumoniae serotype 7 (strain AP76).